We begin with the raw amino-acid sequence, 258 residues long: Imidazole glycerol phosphate synthase subunit HisF (258 aa).

Residues D11 and D130 contribute to the active site.

The protein belongs to the HisA/HisF family. As to quaternary structure, heterodimer of HisH and HisF.

It localises to the cytoplasm. It carries out the reaction 5-[(5-phospho-1-deoxy-D-ribulos-1-ylimino)methylamino]-1-(5-phospho-beta-D-ribosyl)imidazole-4-carboxamide + L-glutamine = D-erythro-1-(imidazol-4-yl)glycerol 3-phosphate + 5-amino-1-(5-phospho-beta-D-ribosyl)imidazole-4-carboxamide + L-glutamate + H(+). It participates in amino-acid biosynthesis; L-histidine biosynthesis; L-histidine from 5-phospho-alpha-D-ribose 1-diphosphate: step 5/9. In terms of biological role, IGPS catalyzes the conversion of PRFAR and glutamine to IGP, AICAR and glutamate. The HisF subunit catalyzes the cyclization activity that produces IGP and AICAR from PRFAR using the ammonia provided by the HisH subunit. The sequence is that of Imidazole glycerol phosphate synthase subunit HisF from Prochlorococcus marinus (strain MIT 9211).